We begin with the raw amino-acid sequence, 75 residues long: MTSMKLHIVALCIIVSFLVNVQSTRIMDASSDCEFKGPCHKKEDCYDSCGVNKPPFNNAICVPGRDSFQCCCILS.

An N-terminal signal peptide occupies residues 1–23 (MTSMKLHIVALCIIVSFLVNVQS). 4 disulfide bridges follow: Cys33–Cys72, Cys39–Cys61, Cys45–Cys70, and Cys49–Cys71.

It belongs to the DEFL family.

The protein localises to the secreted. In Arabidopsis thaliana (Mouse-ear cress), this protein is Putative defensin-like protein 271.